A 129-amino-acid polypeptide reads, in one-letter code: Small ribosomal subunit protein uS11 (129 aa).

Positions 107–129 (IEDVTPVPHDSIRGKGGRRGRRV) are disordered.

Belongs to the universal ribosomal protein uS11 family. In terms of assembly, part of the 30S ribosomal subunit.

Functionally, located on the platform of the 30S subunit. In Methanoculleus marisnigri (strain ATCC 35101 / DSM 1498 / JR1), this protein is Small ribosomal subunit protein uS11.